Here is a 200-residue protein sequence, read N- to C-terminus: Serine/threonine-protein kinase mos (200 aa).

Positions 2–200 constitute a Protein kinase domain; it reads LCLLQPLGSG…ELLKGERVTA (199 aa). Residues 8–16 and Lys29 each bind ATP; that span reads LGSGGFGSV. The Proton acceptor role is filled by Asp143.

The protein belongs to the protein kinase superfamily. Ser/Thr protein kinase family.

The enzyme catalyses L-seryl-[protein] + ATP = O-phospho-L-seryl-[protein] + ADP + H(+). The catalysed reaction is L-threonyl-[protein] + ATP = O-phospho-L-threonyl-[protein] + ADP + H(+). The sequence is that of Serine/threonine-protein kinase mos (MOS) from Ciconia nigra (Black stork).